Consider the following 185-residue polypeptide: Elongation factor P (185 aa).

This sequence belongs to the elongation factor P family.

The protein resides in the cytoplasm. The protein operates within protein biosynthesis; polypeptide chain elongation. Functionally, involved in peptide bond synthesis. Stimulates efficient translation and peptide-bond synthesis on native or reconstituted 70S ribosomes in vitro. Probably functions indirectly by altering the affinity of the ribosome for aminoacyl-tRNA, thus increasing their reactivity as acceptors for peptidyl transferase. This chain is Elongation factor P, found in Salinispora arenicola (strain CNS-205).